The chain runs to 283 residues: MFAFASFAISAIFFLCSFSYVSSIKLCGIPGAPACKRREISLYKRATDTFPDLSSAIASTSYYNISEGTYCHVSGSNLCVSPDVIAICANHSTVLLNCPTVLGYPKGRGSACVETNSSYGLTRGLCQIGSSNYSTSANSSNFDNANVINVTTSVSSGSTSTHSKRSSGISLSYTNIVDQPILFTRDSSMDWSCNMTLCNTDYPYLVNTCFNGTQYPVNCNSALRTPFGGATCRNIGYKGQGICVYTNDSRIPVADDHVIVNTTSKINPNITSVFNYRDNAFLW.

Residues 1–23 form the signal peptide; that stretch reads MFAFASFAISAIFFLCSFSYVSS.

It is found in the secreted. This is an uncharacterized protein from Schizosaccharomyces pombe (strain 972 / ATCC 24843) (Fission yeast).